The chain runs to 336 residues: tRNA-dihydrouridine(20/20a) synthase (336 aa).

FMN-binding positions include 24–26 (PMM) and Gln-77. The active-site Proton donor is the Cys-107. FMN-binding positions include Lys-146, His-178, 218–220 (NGG), and 240–241 (GR).

The protein belongs to the Dus family. DusA subfamily. Requires FMN as cofactor.

The enzyme catalyses 5,6-dihydrouridine(20) in tRNA + NADP(+) = uridine(20) in tRNA + NADPH + H(+). It catalyses the reaction 5,6-dihydrouridine(20) in tRNA + NAD(+) = uridine(20) in tRNA + NADH + H(+). It carries out the reaction 5,6-dihydrouridine(20a) in tRNA + NADP(+) = uridine(20a) in tRNA + NADPH + H(+). The catalysed reaction is 5,6-dihydrouridine(20a) in tRNA + NAD(+) = uridine(20a) in tRNA + NADH + H(+). Functionally, catalyzes the synthesis of 5,6-dihydrouridine (D), a modified base found in the D-loop of most tRNAs, via the reduction of the C5-C6 double bond in target uridines. Specifically modifies U20 and U20a in tRNAs. The polypeptide is tRNA-dihydrouridine(20/20a) synthase (Pseudomonas syringae pv. tomato (strain ATCC BAA-871 / DC3000)).